The following is a 192-amino-acid chain: tRNA (pseudouridine(54)-N(1))-methyltransferase (192 aa).

Residues Leu114 and Gly138 each contribute to the S-adenosyl-L-methionine site.

This sequence belongs to the methyltransferase superfamily. TrmY family. As to quaternary structure, homodimer.

It localises to the cytoplasm. The enzyme catalyses pseudouridine(54) in tRNA + S-adenosyl-L-methionine = N(1)-methylpseudouridine(54) in tRNA + S-adenosyl-L-homocysteine + H(+). Its function is as follows. Specifically catalyzes the N1-methylation of pseudouridine at position 54 (Psi54) in tRNAs. The protein is tRNA (pseudouridine(54)-N(1))-methyltransferase of Aeropyrum pernix (strain ATCC 700893 / DSM 11879 / JCM 9820 / NBRC 100138 / K1).